Reading from the N-terminus, the 427-residue chain is MKLTEAYHDALAALPATPPLPTAVANATEAAAGSEEGKQDGFSKVKVKEKFMNELNKIPLPPWALVAIAIVAIILGLTCCFCICKKCLLKKKNKKKGKEKGGKNAMTMKDVKEMGKSGKEQALKDEDEDAETGLTTDGKEEEKEDEKLGKLQFSLDYDFQNNQLIVGIIQAAELPALDVGGTSDPYVKVFVLPDKKKKYETKVHRKTLNPVFNESFIFKIPYSELGGKTLVMAVYDFDRFSKHDVIGEAKVPMNTVDFGHVTEEWRDLQGAEKEEQEKLGDICFSLRYVPTAGKLTVVILEAKNLKKMDVGGLSDPYVKIHLMQNGKRLKKKKTTIKKNTLNPYYNESFSFEVPFEQIQKVQVVVTVLDYDKIGKNDAIGKVFVGYNSTAAELRHWSDMLANPRRPIAQWHTLQPEEEVDATLGMKK.

Over Met1–Lys57 the chain is Vesicular. N-linked (GlcNAc...) asparagine glycosylation is present at Asn26. A helical membrane pass occupies residues Ile58–Cys84. Over Lys85 to Lys427 the chain is Cytoplasmic. Residues Lys96 to Asp145 form a disordered region. Residues Lys109–Lys124 are compositionally biased toward basic and acidic residues. Residues Glu141–Asn387 form a phospholipid binding region. 2 consecutive C2 domains span residues Lys147 to Arg266 and Lys278 to His411. Ca(2+) is bound by residues Leu177, Asp178, Asp184, Asp236, Phe237, Asp238, Ser241, Lys242, Asp244, Asp309, Asp315, Asp369, Asp371, and Asp377.

The protein belongs to the synaptotagmin family. Homodimer or homotrimer (possible). It depends on Ca(2+) as a cofactor. In terms of tissue distribution, forebrain, cerebellum and neuroendocrine cells.

It localises to the cytoplasmic vesicle. The protein localises to the secretory vesicle. It is found in the synaptic vesicle membrane. Its subcellular location is the synapse. Functionally, may have a regulatory role in the membrane interactions during trafficking of synaptic vesicles at the active zone of the synapse. It binds acidic phospholipids with a specificity that requires the presence of both an acidic head group and a diacyl backbone. The polypeptide is Synaptotagmin-A (P65-A) (Diplobatis ommata (Ocellated electric ray)).